The following is a 105-amino-acid chain: U2-lycotoxin-Ls1c (105 aa).

A signal peptide spans 1 to 17 (MIKYVLISALLVVAVYS). A propeptide spanning residues 18–41 (FTIEDSEDALLEEAEDELDTEEER) is cleaved from the precursor. 4 disulfide bridges follow: cysteine 51–cysteine 67, cysteine 58–cysteine 97, cysteine 60–cysteine 83, and cysteine 69–cysteine 81.

The protein belongs to the neurotoxin 04 (omega-agtx) family. 01 (type I omega-agtx) subfamily. In terms of tissue distribution, expressed by the venom gland.

The protein resides in the secreted. Its function is as follows. Insecticidal to house crickets. It induces an excitatory slow-onset impact that leads to irreversible spastic paralysis. It also modifies human voltage-gated potassium channel Kv1.5/KCNA5. Most likely, it binds to the voltage-sensing domain of the channel, suggesting it does not block the pore but prevents its opening at physiological membrane potentials. The recombinant peptide binds to the channel in an irreversible manner and slows down the hKv1.5 current activation kinetics. It is not toxic to mice, when intracranially injected (at 0.5 ug/g mouse). The chain is U2-lycotoxin-Ls1c from Lycosa singoriensis (Wolf spider).